The sequence spans 695 residues: Electrogenic aspartate/glutamate antiporter Aralar, mitochondrial (695 aa).

The N-terminal domain stretch occupies residues 1–310 (MPMHIPFPFN…DYSDLSNIAP (310 aa)). At 2–345 (PMHIPFPFNW…FIQVLESSYR (344 aa)) the chain is on the mitochondrial intermembrane side. EF-hand domains lie at 71-104 (FNDE…GLLC), 105-140 (TPDA…TELH), 142-175 (KIPF…LLHD), and 176-211 (FHEE…VKRH). Residues aspartate 84, serine 86, aspartate 88, leucine 90, glutamate 95, aspartate 118, asparagine 122, threonine 124, and aspartate 129 each contribute to the Ca(2+) site. Positions 189, 193, and 200 each coordinate Ca(2+). The segment at 311 to 327 (EHYTKHMTHRLAEIKAV) is linker loop domain. Positions 336–627 (FIQVLESSYR…RLFYVDFGGT (292 aa)) are carrier domain. 3 Solcar repeats span residues 340–431 (LESS…VRDK), 439–523 (IPTW…TKAM), and 531–619 (NHPL…LQRL). The helical transmembrane segment at 346 to 363 (FTLGSFAGAVGATVVYPI) threads the bilayer. Over 364–405 (DLVKTRMQNQRAGSYIGEVAYRNSWDCFKKVVRHEGFMGLYR) the chain is Mitochondrial matrix. Residues 406–425 (GLLPQLMGVAPEKAIKLTVN) traverse the membrane as a helical segment. Residues 426 to 448 (DLVRDKLTDKKGNIPTWAEVLAG) are Mitochondrial intermembrane-facing. The helical transmembrane segment at 449–462 (GCAGASQVVFTNPL) threads the bilayer. At 463–497 (EIVKIRLQVAGEIASGSKIRAWSVVRELGLFGLYK) the chain is on the mitochondrial matrix side. Residues 498-517 (GARACLLRDVPFSAIYFPTY) traverse the membrane as a helical segment. The Mitochondrial intermembrane portion of the chain corresponds to 518–536 (AHTKAMMADKDGYNHPLTL). The chain crosses the membrane as a helical span at residues 537 to 554 (LAAGAIAGVPAASLVTPA). At 555–593 (DVIKTRLQVVARSGQTTYTGVWDATKKIMAEEGPRAFWK) the chain is on the mitochondrial matrix side. The helical transmembrane segment at 594-613 (GTAARVFRSSPQFGVTLVTY) threads the bilayer. Over 614–695 (ELLQRLFYVD…AASPSTATGS (82 aa)) the chain is Mitochondrial intermembrane. A C-terminal domain region spans residues 628–695 (QPKGSEAHKI…AASPSTATGS (68 aa)).

The protein belongs to the mitochondrial carrier (TC 2.A.29) family. In terms of assembly, homodimer (via N-terminus). The cofactor is Ca(2+). In terms of tissue distribution, expressed throughout the body in both males and females, including in ovaries and testes. Specifically expressed in female ovaries. As to expression, expressed throughout the body in both males and females but absent from ovaries and testes.

It localises to the mitochondrion inner membrane. It carries out the reaction L-aspartate(in) + L-glutamate(out) + H(+)(out) = L-aspartate(out) + L-glutamate(in) + H(+)(in). The enzyme catalyses 3-sulfino-L-alanine(out) + L-glutamate(in) + H(+)(in) = 3-sulfino-L-alanine(in) + L-glutamate(out) + H(+)(out). It catalyses the reaction L-2-aminoadipate(in) + L-glutamate(out) + H(+)(out) = L-2-aminoadipate(out) + L-glutamate(in) + H(+)(in). The catalysed reaction is L-glutamine(in) + L-glutamate(out) + Na(+)(out) + H(+)(out) = L-glutamine(out) + L-glutamate(in) + Na(+)(in) + H(+)(in). Activated by Ca(2+). Inhibited by p-chloromercuribenzoate, pyrocarbonate, mersalyl, tannic acid and N-ethylmaleimide. Functionally, mitochondrial electrogenic aspartate/glutamate antiporter that favors efflux of aspartate and entry of glutamate and proton within the mitochondria as part of the malate-aspartate shuttle. Also mediates the exchange of L-cysteinesulfinate (3-sulfino-L-alanine) for L-glutamate. Necessary for gamma-aminobutyric acid (GABA) uptake in brain mitochondria in response to increased mitochondrial membrane polarization; does not possess detectable GABA transport activity but role may be indirect. Its function is as follows. Possesses transport activity towards L-aspartate, L-glutamate and L-cysteinesulfinate (3-sulfino-L-alanine). L-glutamine transport activity is undetectable. GABA transport activity is undetectable. Possesses transport activity towards L-aspartate, L-glutamate and L-cysteinesulfinate (3-sulfino-L-alanine). Has a wider substrate specificity range that includes L-2-aminoadipate and L-glutamine. GABA transport activity is undetectable. The chain is Electrogenic aspartate/glutamate antiporter Aralar, mitochondrial from Drosophila melanogaster (Fruit fly).